The primary structure comprises 274 residues: Ribosomal RNA small subunit methyltransferase A (274 aa).

Positions 15, 17, 42, 64, 89, and 108 each coordinate S-adenosyl-L-methionine.

It belongs to the class I-like SAM-binding methyltransferase superfamily. rRNA adenine N(6)-methyltransferase family. RsmA subfamily.

It localises to the cytoplasm. It carries out the reaction adenosine(1518)/adenosine(1519) in 16S rRNA + 4 S-adenosyl-L-methionine = N(6)-dimethyladenosine(1518)/N(6)-dimethyladenosine(1519) in 16S rRNA + 4 S-adenosyl-L-homocysteine + 4 H(+). Functionally, specifically dimethylates two adjacent adenosines (A1518 and A1519) in the loop of a conserved hairpin near the 3'-end of 16S rRNA in the 30S particle. May play a critical role in biogenesis of 30S subunits. The sequence is that of Ribosomal RNA small subunit methyltransferase A from Prochlorococcus marinus (strain MIT 9215).